We begin with the raw amino-acid sequence, 248 residues long: Probable S-methyl-5'-thioinosine phosphorylase (248 aa).

Residues Thr12 and 54 to 55 each bind phosphate; that span reads RH. Met187 is a substrate binding site. Thr188 is a phosphate binding site. 211 to 213 serves as a coordination point for substrate; the sequence is NWA.

Belongs to the PNP/MTAP phosphorylase family. MTAP subfamily. In terms of assembly, homotrimer.

It catalyses the reaction S-methyl-5'-thioinosine + phosphate = 5-(methylsulfanyl)-alpha-D-ribose 1-phosphate + hypoxanthine. The protein operates within purine metabolism; purine nucleoside salvage. Functionally, catalyzes the reversible phosphorylation of S-methyl-5'-thioinosine (MTI) to hypoxanthine and 5-methylthioribose-1-phosphate. Involved in the breakdown of S-methyl-5'-thioadenosine (MTA), a major by-product of polyamine biosynthesis. Catabolism of (MTA) occurs via deamination to MTI and phosphorolysis to hypoxanthine. The chain is Probable S-methyl-5'-thioinosine phosphorylase from Xylella fastidiosa (strain Temecula1 / ATCC 700964).